A 423-amino-acid polypeptide reads, in one-letter code: NADH-quinone oxidoreductase subunit F (423 aa).

Residue 54–63 coordinates NAD(+); it reads GRGGAGFSTG. Residue 166–213 coordinates FMN; the sequence is GAGAYICGEETALLESLEGKKGMPRLKPPFPAGFGLYGCPTTINNVES. [4Fe-4S] cluster contacts are provided by cysteine 344, cysteine 347, cysteine 350, and cysteine 390.

The protein belongs to the complex I 51 kDa subunit family. It depends on FMN as a cofactor. [4Fe-4S] cluster is required as a cofactor.

The enzyme catalyses a quinone + NADH + 5 H(+)(in) = a quinol + NAD(+) + 4 H(+)(out). In terms of biological role, NDH-1 shuttles electrons from NADH, via FMN and iron-sulfur (Fe-S) centers, to quinones in the respiratory chain. Couples the redox reaction to proton translocation (for every two electrons transferred, four hydrogen ions are translocated across the cytoplasmic membrane), and thus conserves the redox energy in a proton gradient. In Rickettsia akari (strain Hartford), this protein is NADH-quinone oxidoreductase subunit F (nuoF).